The sequence spans 591 residues: Protein NRT1/ PTR FAMILY 1.1 (591 aa).

The next 11 helical transmembrane spans lie at 68 to 88 (TVLFMWVAATNFMPLVGAFLS), 98 to 118 (IVIASLSSLLGMVVLWLTAML), 139 to 159 (SSQLALLYTAFALISIGSGGI), 186 to 206 (FFGWYYASSSVAVLIAFTVIV), 216 to 236 (IGFGIPAILMLLAGFLFVFAS), 329 to 349 (LKALVKVIPVWSTGIMMSINV), 374 to 394 (IPAGSFGMFTIIALISWVVLY), 418 to 438 (MGLGLFISFLAMAVSATVEHY), 460 to 480 (AMWLVPQYVLHGLAEALTGIG), 496 to 516 (IAASLFGLGMAVANILASVIL), and 543 to 563 (YYWVLAILSFVNVIYYVVCSW).

It belongs to the major facilitator superfamily. Proton-dependent oligopeptide transporter (POT/PTR) (TC 2.A.17) family. As to expression, expressed in siliques, shoots and roots. Mainly detected in larger expanded leaves, in the companion cells of major veins.

The protein resides in the cell membrane. Functionally, low-affinity nitrate transporter involved in xylem-to-phloem transfer for redistributing nitrate into developing leaves. Not involved in dipeptides transport. The sequence is that of Protein NRT1/ PTR FAMILY 1.1 (NPF1.1) from Arabidopsis thaliana (Mouse-ear cress).